The following is a 104-amino-acid chain: PE-PGRS family protein PE_PGRS60 (104 aa).

One can recognise a PE domain in the interval 1–60; sequence MSYVIAAPEALVAAATDLATLGSTIGAANAAAAGSTTALLTAGADEVSAAIAAYSECTAR. The segment at 64-104 is disordered; it reads HSVRGRRRSMSGSCRPWPQVGAPMRPPRPPASRRCRARSIC. Residues 94-104 show a composition bias toward basic residues; that stretch reads ASRRCRARSIC.

This sequence belongs to the mycobacterial PE family. PGRS subfamily.

Functionally, binds fibronectin. May contribute to pathogenicity. The chain is PE-PGRS family protein PE_PGRS60 from Mycobacterium tuberculosis (strain ATCC 25618 / H37Rv).